Reading from the N-terminus, the 274-residue chain is Urease accessory protein UreD (274 aa).

Belongs to the UreD family. UreD, UreF and UreG form a complex that acts as a GTP-hydrolysis-dependent molecular chaperone, activating the urease apoprotein by helping to assemble the nickel containing metallocenter of UreC. The UreE protein probably delivers the nickel.

Its subcellular location is the cytoplasm. Required for maturation of urease via the functional incorporation of the urease nickel metallocenter. This Lachnoclostridium phytofermentans (strain ATCC 700394 / DSM 18823 / ISDg) (Clostridium phytofermentans) protein is Urease accessory protein UreD.